The primary structure comprises 179 residues: Large ribosomal subunit protein uL6 (179 aa).

It belongs to the universal ribosomal protein uL6 family. In terms of assembly, part of the 50S ribosomal subunit.

In terms of biological role, this protein binds to the 23S rRNA, and is important in its secondary structure. It is located near the subunit interface in the base of the L7/L12 stalk, and near the tRNA binding site of the peptidyltransferase center. This is Large ribosomal subunit protein uL6 from Akkermansia muciniphila (strain ATCC BAA-835 / DSM 22959 / JCM 33894 / BCRC 81048 / CCUG 64013 / CIP 107961 / Muc).